Here is a 295-residue protein sequence, read N- to C-terminus: Defective in cullin neddylation protein 1 (295 aa).

The region spanning 8–45 (QKTKLRQFVQWTQVTEAVSLNFLAKANWNIEYAMTLYF) is the UBA-like domain. Residues 60–272 (VDRSNIERLF…LIDQFVDYCR (213 aa)) enclose the DCUN1 domain.

As to quaternary structure, interacts with the cullin cul-3. Interacts with ubiquitin via its UBA-like domain. Interacts with ned-8/nedd8.

The protein resides in the nucleus. Its function is as follows. Required for neddylation of cullin components of SCF-type E3 ubiquitin ligase complexes. Neddylation of cullins play an essential role in the regulation of SCF-type complexes activity. Does not act by preventing deneddylation, but rather facilitates neddylation, possibly by acting with rbx-1 to recruit the Nedd8-charged E2 enzyme to the cullin component of SCF-type complexes. The polypeptide is Defective in cullin neddylation protein 1 (dcn-1) (Caenorhabditis elegans).